Here is a 303-residue protein sequence, read N- to C-terminus: Protoheme IX farnesyltransferase (303 aa).

Helical transmembrane passes span 25–45 (MGLV…AVVM), 54–74 (IPQI…ACAL), 104–124 (LLLL…LLNI), 125–145 (PSGV…SIWS), 151–171 (WNTV…WVAI), 179–199 (AIAL…ALAI), 227–247 (FIWL…GVVF), 248–268 (VVLA…TFKK), and 280–300 (FIYS…VSLL).

Belongs to the UbiA prenyltransferase family. Protoheme IX farnesyltransferase subfamily. Interacts with CtaA.

The protein localises to the cell membrane. The enzyme catalyses heme b + (2E,6E)-farnesyl diphosphate + H2O = Fe(II)-heme o + diphosphate. The protein operates within porphyrin-containing compound metabolism; heme O biosynthesis; heme O from protoheme: step 1/1. In terms of biological role, converts heme B (protoheme IX) to heme O by substitution of the vinyl group on carbon 2 of heme B porphyrin ring with a hydroxyethyl farnesyl side group. In Staphylococcus aureus (strain Mu3 / ATCC 700698), this protein is Protoheme IX farnesyltransferase.